A 73-amino-acid polypeptide reads, in one-letter code: UPF0154 protein PEPE_0872 (73 aa).

A helical transmembrane segment spans residues 5-25 (IWIMIVIIALLVGAVGGFFFA).

It belongs to the UPF0154 family.

The protein localises to the cell membrane. This is UPF0154 protein PEPE_0872 from Pediococcus pentosaceus (strain ATCC 25745 / CCUG 21536 / LMG 10740 / 183-1w).